The sequence spans 377 residues: Chaperone protein DnaJ (377 aa).

In terms of domain architecture, J spans 5–70; it reads DFYEVLGVER…SKRAAYDQYG (66 aa). The segment at 136-214 adopts a CR-type zinc-finger fold; sequence GTTVTIRVPT…CHGQGRVEEQ (79 aa). Residues Cys-149, Cys-152, Cys-166, Cys-169, Cys-188, Cys-191, Cys-202, and Cys-205 each contribute to the Zn(2+) site. CXXCXGXG motif repeat units follow at residues 149 to 156, 166 to 173, 188 to 195, and 202 to 209; these read CKTCNGSG, CTTCGGIG, CPRCHGTG, and CGSCHGQG.

Belongs to the DnaJ family. In terms of assembly, homodimer. Zn(2+) is required as a cofactor.

The protein resides in the cytoplasm. Functionally, participates actively in the response to hyperosmotic and heat shock by preventing the aggregation of stress-denatured proteins and by disaggregating proteins, also in an autonomous, DnaK-independent fashion. Unfolded proteins bind initially to DnaJ; upon interaction with the DnaJ-bound protein, DnaK hydrolyzes its bound ATP, resulting in the formation of a stable complex. GrpE releases ADP from DnaK; ATP binding to DnaK triggers the release of the substrate protein, thus completing the reaction cycle. Several rounds of ATP-dependent interactions between DnaJ, DnaK and GrpE are required for fully efficient folding. Also involved, together with DnaK and GrpE, in the DNA replication of plasmids through activation of initiation proteins. This chain is Chaperone protein DnaJ, found in Pseudomonas aeruginosa (strain LESB58).